Consider the following 662-residue polypeptide: Glycogen debranching enzyme (662 aa).

Asp338 acts as the Nucleophile in catalysis. Residue Glu373 is the Proton donor of the active site.

Belongs to the glycosyl hydrolase 13 family.

The catalysed reaction is Hydrolysis of (1-&gt;6)-alpha-D-glucosidic linkages to branches with degrees of polymerization of three or four glucose residues in limit dextrin.. It functions in the pathway glycan degradation; glycogen degradation. Its function is as follows. Removes maltotriose and maltotetraose chains that are attached by 1,6-alpha-linkage to the limit dextrin main chain, generating a debranched limit dextrin. The polypeptide is Glycogen debranching enzyme (Yersinia pseudotuberculosis serotype I (strain IP32953)).